Consider the following 139-residue polypeptide: MHEWALADAIVRTVLDYAQREGASRVKAVRVVLGELQDVAEDIVKFAMEQLFAGTIAEGAEIEFVEEEAVFKCRNCNYEWKLKEVKDKFDERIKEDIHFIPEVVHAFLACPKCGSHDFEVVKGRGVYVAGIKIEKEGGS.

Positions 1 and 2 each coordinate Ni(2+). Zn(2+) contacts are provided by Cys-73 and Cys-76. His-98 serves as a coordination point for Ni(2+). The Zn(2+) site is built by Cys-110 and Cys-113.

It belongs to the HypA/HybF family. Monomer and homodimer. Could also form hexamers. Forms a complex with HypB.

Functionally, involved in the maturation of [NiFe] hydrogenases. Required for nickel insertion into the metal center of the hydrogenase. This chain is Hydrogenase maturation factor HypA, found in Thermococcus kodakarensis (strain ATCC BAA-918 / JCM 12380 / KOD1) (Pyrococcus kodakaraensis (strain KOD1)).